Here is a 296-residue protein sequence, read N- to C-terminus: Sulfate adenylyltransferase subunit 2 (296 aa).

The protein belongs to the PAPS reductase family. CysD subfamily. As to quaternary structure, heterodimer composed of CysD, the smaller subunit, and CysN.

The catalysed reaction is sulfate + ATP + H(+) = adenosine 5'-phosphosulfate + diphosphate. It functions in the pathway sulfur metabolism; hydrogen sulfide biosynthesis; sulfite from sulfate: step 1/3. In terms of biological role, with CysN forms the ATP sulfurylase (ATPS) that catalyzes the adenylation of sulfate producing adenosine 5'-phosphosulfate (APS) and diphosphate, the first enzymatic step in sulfur assimilation pathway. APS synthesis involves the formation of a high-energy phosphoric-sulfuric acid anhydride bond driven by GTP hydrolysis by CysN coupled to ATP hydrolysis by CysD. This is Sulfate adenylyltransferase subunit 2 from Rhodospirillum rubrum (strain ATCC 11170 / ATH 1.1.1 / DSM 467 / LMG 4362 / NCIMB 8255 / S1).